The sequence spans 248 residues: Peroxisomal membrane protein 11A (248 aa).

Over 1–97 (MATKAPEKIT…RSSRWDSNHE (97 aa)) the chain is Cytoplasmic. The helical transmembrane segment at 98-118 (LVLLIIAYGGEGLYYFVEQFI) threads the bilayer. The Lumenal segment spans residues 119 to 220 (WLTKSGLIDA…MTIADIRDGK (102 aa)). Residues 221–241 (GVLSAPNVISSAGLFSAIVST) traverse the membrane as a helical segment. Topologically, residues 242-248 (HKNWISC) are cytoplasmic.

It belongs to the peroxin-11 family. Homooligomer. Interacts with ARC5 and FIS1B on peroxisomes. Expressed in developing siliques.

The protein localises to the peroxisome membrane. Its function is as follows. Involved in peroxisomal proliferation. Promotes peroxisomal duplication, aggregation or elongation without fission. This Arabidopsis thaliana (Mouse-ear cress) protein is Peroxisomal membrane protein 11A (PEX11A).